A 448-amino-acid chain; its full sequence is Probable glycine dehydrogenase (decarboxylating) subunit 1 (448 aa).

It belongs to the GcvP family. N-terminal subunit subfamily. As to quaternary structure, the glycine cleavage system is composed of four proteins: P, T, L and H. In this organism, the P 'protein' is a heterodimer of two subunits.

The catalysed reaction is N(6)-[(R)-lipoyl]-L-lysyl-[glycine-cleavage complex H protein] + glycine + H(+) = N(6)-[(R)-S(8)-aminomethyldihydrolipoyl]-L-lysyl-[glycine-cleavage complex H protein] + CO2. The glycine cleavage system catalyzes the degradation of glycine. The P protein binds the alpha-amino group of glycine through its pyridoxal phosphate cofactor; CO(2) is released and the remaining methylamine moiety is then transferred to the lipoamide cofactor of the H protein. This Listeria monocytogenes serotype 4b (strain CLIP80459) protein is Probable glycine dehydrogenase (decarboxylating) subunit 1.